We begin with the raw amino-acid sequence, 201 residues long: Recombination protein RecR (201 aa).

A C4-type zinc finger spans residues 58–73 (CEQCASITDTCPCRIC). In terms of domain architecture, Toprim spans 81–178 (DKLCLVSEWD…ELSRLAQGIP (98 aa)).

The protein belongs to the RecR family.

May play a role in DNA repair. It seems to be involved in an RecBC-independent recombinational process of DNA repair. It may act with RecF and RecO. In Maridesulfovibrio salexigens (strain ATCC 14822 / DSM 2638 / NCIMB 8403 / VKM B-1763) (Desulfovibrio salexigens), this protein is Recombination protein RecR.